The sequence spans 371 residues: Glycerol-3-phosphate dehydrogenase [NAD(+)] 2 (371 aa).

NAD(+) contacts are provided by residues 18–23 (GSGNWG), F50, and F106. K129 contacts substrate. A162 contributes to the NAD(+) binding site. K222 serves as the catalytic Proton acceptor. NAD(+) contacts are provided by R294 and Q323. 294–295 (RN) is a substrate binding site.

This sequence belongs to the NAD-dependent glycerol-3-phosphate dehydrogenase family. Interacts with human CFH/complement factor H; the interaction is direct and enables the pathogen to evade the host innate immune system. Interacts with human CFHR1/complement factor H-related protein 1; the interaction is direct. Interacts with human PLG/plasminogen; the interaction is direct and provides active plasmin on the surface of fungal cells.

It localises to the secreted. Its subcellular location is the cell wall. The protein resides in the cytoplasm. It is found in the peroxisome. The enzyme catalyses sn-glycerol 3-phosphate + NAD(+) = dihydroxyacetone phosphate + NADH + H(+). In terms of biological role, may catalyze the production and accumulation of glycerol during hyperosmotic stress conditions. Glycerol acts as a osmoregulator that prevents loss of water and turgor of the cells. Mediates evasion of the host innate immune system by binding inhibitory components of the host alternative complement system, in a manner dependent on estrogen-induced inhibition of EBP1. This chain is Glycerol-3-phosphate dehydrogenase [NAD(+)] 2, found in Candida albicans (strain SC5314 / ATCC MYA-2876) (Yeast).